Here is a 345-residue protein sequence, read N- to C-terminus: Phosphoribosylformylglycinamidine cyclo-ligase (345 aa).

Belongs to the AIR synthase family.

Its subcellular location is the cytoplasm. The enzyme catalyses 2-formamido-N(1)-(5-O-phospho-beta-D-ribosyl)acetamidine + ATP = 5-amino-1-(5-phospho-beta-D-ribosyl)imidazole + ADP + phosphate + H(+). Its pathway is purine metabolism; IMP biosynthesis via de novo pathway; 5-amino-1-(5-phospho-D-ribosyl)imidazole from N(2)-formyl-N(1)-(5-phospho-D-ribosyl)glycinamide: step 2/2. The polypeptide is Phosphoribosylformylglycinamidine cyclo-ligase (Ligilactobacillus salivarius (strain UCC118) (Lactobacillus salivarius)).